The primary structure comprises 101 residues: NAD(P)H-quinone oxidoreductase subunit 4L, chloroplastic (101 aa).

3 helical membrane-spanning segments follow: residues 2-22 (MLEH…YGLI), 32-52 (MCLE…SDFF), and 61-81 (IFSI…LAIV).

This sequence belongs to the complex I subunit 4L family. NDH is composed of at least 16 different subunits, 5 of which are encoded in the nucleus.

It is found in the plastid. The protein resides in the chloroplast thylakoid membrane. It carries out the reaction a plastoquinone + NADH + (n+1) H(+)(in) = a plastoquinol + NAD(+) + n H(+)(out). The catalysed reaction is a plastoquinone + NADPH + (n+1) H(+)(in) = a plastoquinol + NADP(+) + n H(+)(out). Its function is as follows. NDH shuttles electrons from NAD(P)H:plastoquinone, via FMN and iron-sulfur (Fe-S) centers, to quinones in the photosynthetic chain and possibly in a chloroplast respiratory chain. The immediate electron acceptor for the enzyme in this species is believed to be plastoquinone. Couples the redox reaction to proton translocation, and thus conserves the redox energy in a proton gradient. In Panax ginseng (Korean ginseng), this protein is NAD(P)H-quinone oxidoreductase subunit 4L, chloroplastic.